Reading from the N-terminus, the 306-residue chain is tRNA dimethylallyltransferase 1 (306 aa).

ATP is bound at residue 15–22; the sequence is GPTGSGKS. Substrate is bound at residue 17 to 22; the sequence is TGSGKS. The interaction with substrate tRNA stretch occupies residues 40-43; the sequence is DSMQ.

It belongs to the IPP transferase family. In terms of assembly, monomer. The cofactor is Mg(2+).

It carries out the reaction adenosine(37) in tRNA + dimethylallyl diphosphate = N(6)-dimethylallyladenosine(37) in tRNA + diphosphate. Its function is as follows. Catalyzes the transfer of a dimethylallyl group onto the adenine at position 37 in tRNAs that read codons beginning with uridine, leading to the formation of N6-(dimethylallyl)adenosine (i(6)A). The protein is tRNA dimethylallyltransferase 1 of Citrifermentans bemidjiense (strain ATCC BAA-1014 / DSM 16622 / JCM 12645 / Bem) (Geobacter bemidjiensis).